The sequence spans 527 residues: Bifunctional purine biosynthesis protein PurH (527 aa).

The 148-residue stretch at 9–156 folds into the MGS-like domain; that stretch reads NAKRPIRRAL…KNHPSVAVVV (148 aa).

The protein belongs to the PurH family.

It catalyses the reaction (6R)-10-formyltetrahydrofolate + 5-amino-1-(5-phospho-beta-D-ribosyl)imidazole-4-carboxamide = 5-formamido-1-(5-phospho-D-ribosyl)imidazole-4-carboxamide + (6S)-5,6,7,8-tetrahydrofolate. The catalysed reaction is IMP + H2O = 5-formamido-1-(5-phospho-D-ribosyl)imidazole-4-carboxamide. The protein operates within purine metabolism; IMP biosynthesis via de novo pathway; 5-formamido-1-(5-phospho-D-ribosyl)imidazole-4-carboxamide from 5-amino-1-(5-phospho-D-ribosyl)imidazole-4-carboxamide (10-formyl THF route): step 1/1. It functions in the pathway purine metabolism; IMP biosynthesis via de novo pathway; IMP from 5-formamido-1-(5-phospho-D-ribosyl)imidazole-4-carboxamide: step 1/1. The protein is Bifunctional purine biosynthesis protein PurH of Mycolicibacterium paratuberculosis (strain ATCC BAA-968 / K-10) (Mycobacterium paratuberculosis).